The sequence spans 3416 residues: MAKGAVLKGKGGGPPRRVPKETAKKTRQGPGRLPNGLVLMRMMGVLWHMIAGTARSPILKRFWATVPVRQAIAALRKIRKTVGLLLDSLNRRRGKRRSTTGLLTSILLACLATLVISATIRRERTGDMVIRAEGKDAATQVEVVNGTCIILATDMGSWCDDSIMYECVTIDSGEEPVDVDCFCRGVERVSLEYGRCGKPVGGRSRRSVSIPVHAHSDLTGRGHKWLRGDSVKTHLTRVEGWVWKNKLLTMAFCAVVWMVTDSLPTRFIVITVALCLAPTYATRCTHLQNRDFVSGIQGTTRVSLVLELGGCVTLTAEGKPSVDVWLDDIHQENPAKTREYCLHAKLASSKVVARCPAMGPATLPEEHQASTVCRRDQSDRGWGNHCGLFGKGSIVACAKFACEAKKKATGYVYDVNKITYVVKVEPHTGDYLAANESHSNRKTASFTTQSEKTILTLGDYGDISLTCRVTSGVDPAQTVVLELDKTAEHLPKAWQVHRDWFEDLSLPWRHEGAHEWNHADRLVEFGEPHAVKMDIFNLGDQTGILLKSLAGVPVANIEGSKYHLQSGHVTCDVGLEKLKMKGMTYTVCEGSKFAWKRPPTDSGHDTVVMEVTYTGSKPCRIPVRAVAHGEPNVNVASLITPNPSMETTGGGFVELQLPPGDNIIYVGELSHQWFQKGSTIGRVLEKTRRGIERLTVVGEHAWDFGSVGGVLSSVGKALHTAFGAAFNTIFGGVGFLPRILLGVALAWLGLNSRNPTLSVGFLITGGLVLTMTLGVGADMGCAIDANRMELRCGEGLVVWREVTDWYDGYAFHPESPPVLAASLKEAYEEGVCGIVPQNRLEMAMWRRVEAVLNLALAESDANLTVVVDRRDPSDYRGGKVGILKRSGKEMKTSWKGWSQSFVWSVPESPRRFMVGIEGTGECPLDKRRTGVFTVAEFGMGMRTKIFLDLRETSSSDCDTGVMGAAVKSGHAVHTDQSLWMKSHRNATGVFISELIVTDLRNCTWPASHTLDNAGVVDSKLFLPVSLAGPRSHYNHIPGYAEQVRGPWNQTPLRVVREPCPGTTVKIDQNCDKRGSSLRSTTESGKAIPEWCCRTCELPPVTFRSGTDCWYAMEIRPVHQQGGLVRSMVLADNGAMLSEGGVPGIVAVFVVLELVIRRRPTTGTSVVWCGVVVLGLVVTGLVTIEGLCRYVVAVGILMSMELGPEIVALVLLQAVFDMRTGLLVAFAVKRAYTTREAVVTYFLLLVLELGFPEASLSNIWKWADSLAMGTLILQACSQEGRARVGYLLAAMMTQKDMAIIHTGLTIFLSAATAMAVWSMIKGQRDQKGLSWATPLVGLFGGEGVGLRLLAFRRLAERRNRRSFSEPLTVVGVMLTVASGMVRHTSQEALCALVAGAFLLLMMVLGTRKMQLIAEWCGEVEWNPDLVNEGGEVNLKVRQDAMGNLHLTEVEKEERAMALWLLAGLVASAFHWAGILIVLAIWTFFEMLSSGRRSELVFSGQGTRTERNRPFEIKDGAYRIYSPGLLWGHRQIGVGYGAKGVLHTMWHVTRGAALVVEEAISGPYWADVREDVVCYGGAWSLESRWRGETVQVHAFPPGRPQETHQCQPGELILENGRKLGAVPIDLSKGTSGSPIINAQGEVVGLYGNGLKTNEAYVSSIAQGEAEKSRPELPLSVQGTGWMSKGQITVLDMHPGSGKTHRVLPELVRQCANRGMRTLVLAPTRVVLKEMEKALAGKKVRFHSPAVEGQSTAGAVVDVMCHATYVHRRLLPQGRQNWEVAIMDEAHWTDPHSIAARGHLYSLAKENRCALVLMTATPPGRGDPFPESNGAIMSEERAIPDGEWREGFDWITEYEGRTAWFVPSISKGGAIARTLRQRGKSVICLNSKTFEKDYLRVREEKPDFVVTTDISEMGANLDVSRVIDGRTNIKPEEVDGKVEMTGTRKITTASAAQRRGRVGRTSGRTDEYIYSGQCDDDDTSLVQWKEAQILLDNITTLRGPVATFYGPEQMKMPEVAGHYRLNEEKRKHFRHLMTQCDFTPWLAWHVATNTSNVLDRSWTWQGPEGNAIDGADGDLVRFKTPGGSERVLQPVWKDCRMFREGRDVKDFILYASGRRSVGDVLGGLAGVPGLLRHRCASALDVVYTLLNENPGSRAMRMAERDAPEAFLTIVEVAVLGVATLGILWCFVARTSVSRMFLGTVVLFAALLLLWIGGVDYGYMAGIALIFYIFLTVLQPEPGKQRSSDDNRLAYFLLGLLSLAGLVTANEMGMLDKTKADLAGLMWHGEQRHPAWEEWTNVDIQPARSWGTYVLIVSLFTPYMLHQLQTKIQQLVNSSVASGAQAMRDLGGGTPFFGVAGHVIALGVTSLVGATPLSLGLGVALAAFHLAIVASGLEAELTQRAHRVFFSAMVKNPMVDGDVINPFPDGEPKPVLYERRMSLILAIALCMVSVVLNRTAASMTEAGAVGLAALGQLVHPETETLWTMPMACGMAGLVRGSFWGLLPMGHRLWLKTTGTRRGGADGETLGDIWKRRLNGCSREEFFQYRRSGVMETERDRARELLKRGETNMGLAVSRGTAKLAWLEERGYATLKGEVVDLGCGRGGWSYYAASRPAVMGVKAYTIGGKGHEVPRLITSLGWNLIKFRTGMDVYSLEAHRADTILCDIGESNPDPLVEGERSRRVILLMEKWKLRNPDASCVFKVLAPYRPEVLEALHRFQLQWGGGLVRVPFSRNSTHEMYFSTAVSGNIVNSVNIQSRKLLARFGDQRGPAKVPEVDLGTGTRCVVLAEDKVREADVAERITALKTQYGDSWHVDKEHPYRTWQYWGSYKTEATGSAASLINGVVKLLSWPWNAREDVVRMAMTDTTAFGQQRVFKEKVDTKAQEPQVGTKIIMRAVNDWILERLAGKKTPRLCTREEFIAKVRSNAALGAWSDEQNRWSNAREAVEDPEFWRLVDEERERHLRGRCAQCVYNMMGKREKKLGEFGVAKGSRAIWYMWLGSRYLEFEALGFLNEDHWASRDLSGAGVEGISLNYLGWHLKRLSELEGGLFYADDTAGWDTRITNADLEDEEQILRYLRGEHRTLAKTILEKAYHAKVVKVARPSSSGGCVMDIITRRDQRGSGQVVTYALNTLTNIKVQLIRMMEGEGVIGPSDSQDPRLLRVEAWLKEYGEERLTRMLVSGDDCVVRPIDDRFGKALYFLNDMAKVRKDIGEWEPSEGYSSWEEVPFCSHHFHELTMKDGRVIIVPCRDQDELVGRARVSPGCGWSVRETACLSKAYGQMWLLSYFHRRDLRTLGLAICSAVPIDWVPQGRTTWSIHASGAWMTTEDMLEVWNRVWILDNPFMSDKGKVKEWRDIPYLPKSQDGLCSSLVGRRERAEWAKNIWGSVEKVRRMIGPERYADYLSCMDRHELHWDLKLESNII.

Positions 1 to 34 (MAKGAVLKGKGGGPPRRVPKETAKKTRQGPGRLP) are disordered. At 1 to 99 (MAKGAVLKGK…NRRRGKRRST (99 aa)) the chain is on the cytoplasmic side. Positions 97 to 117 (RSTTGLLTSILLACLATLVIS) are cleaved as a propeptide — ER anchor for the capsid protein C, removed in mature form by serine protease NS3. A helical membrane pass occupies residues 100–120 (TGLLTSILLACLATLVISATI). At 121–243 (RRERTGDMVI…HLTRVEGWVW (123 aa)) the chain is on the extracellular side. Residue asparagine 145 is glycosylated (N-linked (GlcNAc...) asparagine; by host). Residues 244–261 (KNKLLTMAFCAVVWMVTD) traverse the membrane as a helical segment. A topological domain (cytoplasmic) is located at residue serine 262. A helical membrane pass occupies residues 263 to 281 (LPTRFIVITVALCLAPTYA). Over 282–728 (TRCTHLQNRD…HTAFGAAFNT (447 aa)) the chain is Extracellular. 6 disulfides stabilise this stretch: cysteine 284–cysteine 311, cysteine 341–cysteine 397, cysteine 341–cysteine 402, cysteine 355–cysteine 386, cysteine 373–cysteine 397, and cysteine 373–cysteine 402. The fusion peptide stretch occupies residues 379-392 (DRGWGNHCGLFGKG). N-linked (GlcNAc...) asparagine; by host glycosylation occurs at asparagine 435. Intrachain disulfides connect cysteine 467–cysteine 571 and cysteine 588–cysteine 619. A helical membrane pass occupies residues 729 to 749 (IFGGVGFLPRILLGVALAWLG). The Cytoplasmic portion of the chain corresponds to 750-756 (LNSRNPT). Residues 757 to 777 (LSVGFLITGGLVLTMTLGVGA) form a helical membrane-spanning segment. The Extracellular portion of the chain corresponds to 778 to 1134 (DMGCAIDANR…RSMVLADNGA (357 aa)). 6 disulfide bridges follow: cysteine 781–cysteine 792, cysteine 832–cysteine 922, cysteine 957–cysteine 1002, cysteine 1059–cysteine 1108, cysteine 1070–cysteine 1092, and cysteine 1091–cysteine 1095. N-linked (GlcNAc...) asparagine; by host glycosylation is found at asparagine 862, asparagine 985, and asparagine 1001. Residues 1135–1155 (MLSEGGVPGIVAVFVVLELVI) traverse the membrane as a helical segment. Residues 1156–1162 (RRRPTTG) lie on the Cytoplasmic side of the membrane. The chain crosses the membrane as a helical span at residues 1163 to 1183 (TSVVWCGVVVLGLVVTGLVTI). The Lumenal segment spans residues 1184 to 1189 (EGLCRY). The chain crosses the membrane as a helical span at residues 1190 to 1210 (VVAVGILMSMELGPEIVALVL). The Cytoplasmic segment spans residues 1211-1235 (LQAVFDMRTGLLVAFAVKRAYTTRE). The chain crosses the membrane as a helical span at residues 1236-1256 (AVVTYFLLLVLELGFPEASLS). At 1257–1295 (NIWKWADSLAMGTLILQACSQEGRARVGYLLAAMMTQKD) the chain is on the lumenal side. A helical transmembrane segment spans residues 1296–1316 (MAIIHTGLTIFLSAATAMAVW). The Cytoplasmic segment spans residues 1317-1361 (SMIKGQRDQKGLSWATPLVGLFGGEGVGLRLLAFRRLAERRNRRS). A helical membrane pass occupies residues 1362–1379 (FSEPLTVVGVMLTVASGM). Over 1380-1384 (VRHTS) the chain is Lumenal. The helical transmembrane segment at 1385-1405 (QEALCALVAGAFLLLMMVLGT) threads the bilayer. Residues 1406–1458 (RKMQLIAEWCGEVEWNPDLVNEGGEVNLKVRQDAMGNLHLTEVEKEERAMALW) lie on the Cytoplasmic side of the membrane. The interval 1412-1451 (AEWCGEVEWNPDLVNEGGEVNLKVRQDAMGNLHLTEVEKE) is interacts with and activates NS3 protease. The helical intramembrane region spans 1459-1479 (LLAGLVASAFHWAGILIVLAI). The Cytoplasmic portion of the chain corresponds to 1480–2162 (WTFFEMLSSG…RMAERDAPEA (683 aa)). One can recognise a Peptidase S7 domain in the interval 1492–1671 (SELVFSGQGT…EAEKSRPELP (180 aa)). Residues histidine 1545, aspartate 1569, and serine 1629 each act as charge relay system; for serine protease NS3 activity in the active site. One can recognise a Helicase ATP-binding domain in the interval 1677–1833 (TGWMSKGQIT…ESNGAIMSEE (157 aa)). 1690 to 1697 (MHPGSGKT) is an ATP binding site. The DEAH box motif lies at 1781-1784 (DEAH). One can recognise a Helicase C-terminal domain in the interval 1844-2002 (GFDWITEYEG…TLRGPVATFY (159 aa)). Lysine 1885 is modified (N6-acetyllysine; by host). The chain crosses the membrane as a helical span at residues 2163-2183 (FLTIVEVAVLGVATLGILWCF). Residues 2184 to 2191 (VARTSVSR) lie on the Lumenal side of the membrane. An intramembrane region (helical) is located at residues 2192-2211 (MFLGTVVLFAALLLLWIGGV). Residue aspartate 2212 is a topological domain, lumenal. Residues 2213-2233 (YGYMAGIALIFYIFLTVLQPE) form a helical membrane-spanning segment. The Cytoplasmic portion of the chain corresponds to 2234-2246 (PGKQRSSDDNRLA). The chain crosses the membrane as a helical span at residues 2247-2267 (YFLLGLLSLAGLVTANEMGML). The Lumenal segment spans residues 2268 to 2301 (DKTKADLAGLMWHGEQRHPAWEEWTNVDIQPARS). An intramembrane region (helical) is located at residues 2302-2322 (WGTYVLIVSLFTPYMLHQLQT). At 2323–2345 (KIQQLVNSSVASGAQAMRDLGGG) the chain is on the lumenal side. Residues 2346 to 2366 (TPFFGVAGHVIALGVTSLVGA) constitute an intramembrane region (helical). Residues 2367-2368 (TP) are Lumenal-facing. A helical transmembrane segment spans residues 2369 to 2389 (LSLGLGVALAAFHLAIVASGL). The Cytoplasmic portion of the chain corresponds to 2390–2432 (EAELTQRAHRVFFSAMVKNPMVDGDVINPFPDGEPKPVLYERR). Residues 2433–2453 (MSLILAIALCMVSVVLNRTAA) form a helical membrane-spanning segment. The Lumenal segment spans residues 2454 to 2476 (SMTEAGAVGLAALGQLVHPETET). Residues 2477 to 2497 (LWTMPMACGMAGLVRGSFWGL) form a helical membrane-spanning segment. Residues 2498-3416 (LPMGHRLWLK…WDLKLESNII (919 aa)) are Cytoplasmic-facing. In terms of domain architecture, mRNA cap 0-1 NS5-type MT spans 2514 to 2778 (GGADGETLGD…EVDLGTGTRC (265 aa)). Serine 2569 lines the S-adenosyl-L-methionine pocket. Serine 2569 carries the post-translational modification Phosphoserine. Residue lysine 2574 is the For 2'-O-MTase activity of the active site. The S-adenosyl-L-methionine site is built by glycine 2599, tryptophan 2600, threonine 2617, isoleucine 2618, aspartate 2644, and valine 2645. The active-site For 2'-O-MTase activity is the aspartate 2659. Isoleucine 2660 provides a ligand contact to S-adenosyl-L-methionine. Catalysis depends on for 2'-O-MTase activity residues lysine 2696 and glutamate 2732. The interval 2732–2736 (EMYFS) is interaction with host SCRIB. S-adenosyl-L-methionine is bound at residue tyrosine 2734. 4 residues coordinate Zn(2+): glutamate 2952, histidine 2956, cysteine 2961, and cysteine 2964. A RdRp catalytic domain is found at 3042–3191 (GLFYADDTAG…RPIDDRFGKA (150 aa)). Residues histidine 3226, cysteine 3242, and cysteine 3361 each contribute to the Zn(2+) site.

The protein in the N-terminal section; belongs to the class I-like SAM-binding methyltransferase superfamily. mRNA cap 0-1 NS5-type methyltransferase family. Homodimer. Interacts (via N-terminus) with host EXOC1 (via C-terminus); this interaction results in EXOC1 degradation through the proteasome degradation pathway. As to quaternary structure, forms heterodimers with envelope protein E in the endoplasmic reticulum and Golgi. In terms of assembly, homodimer; in the endoplasmic reticulum and Golgi. Interacts with protein prM. Interacts with non-structural protein 1. Homodimer; Homohexamer when secreted. Interacts with envelope protein E. As to quaternary structure, interacts (via N-terminus) with serine protease NS3. In terms of assembly, forms a heterodimer with serine protease NS3. May form homooligomers. Forms a heterodimer with NS2B. Interacts with NS4B. Interacts with unphosphorylated RNA-directed RNA polymerase NS5; this interaction stimulates RNA-directed RNA polymerase NS5 guanylyltransferase activity. As to quaternary structure, interacts with serine protease NS3. In terms of assembly, homodimer. Interacts with host STAT2; this interaction inhibits the phosphorylation of the latter, and, when all viral proteins are present (polyprotein), targets STAT2 for degradation. Interacts with serine protease NS3. Post-translationally, specific enzymatic cleavages in vivo yield mature proteins. Cleavages in the lumen of endoplasmic reticulum are performed by host signal peptidase, whereas cleavages in the cytoplasmic side are performed by serine protease NS3. Signal cleavage at the 2K-4B site requires a prior NS3 protease-mediated cleavage at the 4A-2K site. Cleaved in post-Golgi vesicles by a host furin, releasing the mature small envelope protein M, and peptide pr. This cleavage is incomplete as up to 30% of viral particles still carry uncleaved prM. In terms of processing, N-glycosylated. Post-translationally, N-glycosylated. The excreted form is glycosylated and this is required for efficient secretion of the protein from infected cells. Acetylated by host KAT5. Acetylation modulates NS3 RNA-binding and unwinding activities and plays an important positive role for viral replication. In terms of processing, phosphorylated on serines residues. This phosphorylation may trigger NS5 nuclear localization.

Its subcellular location is the virion. It is found in the host nucleus. The protein localises to the host cytoplasm. The protein resides in the host perinuclear region. It localises to the secreted. Its subcellular location is the virion membrane. It is found in the host endoplasmic reticulum membrane. It catalyses the reaction Selective hydrolysis of -Xaa-Xaa-|-Yaa- bonds in which each of the Xaa can be either Arg or Lys and Yaa can be either Ser or Ala.. The enzyme catalyses RNA(n) + a ribonucleoside 5'-triphosphate = RNA(n+1) + diphosphate. It carries out the reaction a ribonucleoside 5'-triphosphate + H2O = a ribonucleoside 5'-diphosphate + phosphate + H(+). The catalysed reaction is ATP + H2O = ADP + phosphate + H(+). It catalyses the reaction a 5'-end (5'-triphosphoguanosine)-ribonucleoside in mRNA + S-adenosyl-L-methionine = a 5'-end (N(7)-methyl 5'-triphosphoguanosine)-ribonucleoside in mRNA + S-adenosyl-L-homocysteine. The enzyme catalyses a 5'-end (N(7)-methyl 5'-triphosphoguanosine)-ribonucleoside in mRNA + S-adenosyl-L-methionine = a 5'-end (N(7)-methyl 5'-triphosphoguanosine)-(2'-O-methyl-ribonucleoside) in mRNA + S-adenosyl-L-homocysteine + H(+). Plays a role in virus budding by binding to the cell membrane and gathering the viral RNA into a nucleocapsid that forms the core of a mature virus particle. During virus entry, may induce genome penetration into the host cytoplasm after hemifusion induced by the surface proteins. Can migrate to the cell nucleus where it modulates host functions. In terms of biological role, inhibits RNA silencing by interfering with host Dicer. Functionally, prevents premature fusion activity of envelope proteins in trans-Golgi by binding to envelope protein E at pH6.0. After virion release in extracellular space, gets dissociated from E dimers. Its function is as follows. Acts as a chaperone for envelope protein E during intracellular virion assembly by masking and inactivating envelope protein E fusion peptide. prM is the only viral peptide matured by host furin in the trans-Golgi network probably to avoid catastrophic activation of the viral fusion activity in acidic Golgi compartment prior to virion release. prM-E cleavage is inefficient, and many virions are only partially matured. These uncleaved prM would play a role in immune evasion. May play a role in virus budding. Exerts cytotoxic effects by activating a mitochondrial apoptotic pathway through M ectodomain. May display a viroporin activity. In terms of biological role, binds to host cell surface receptor and mediates fusion between viral and cellular membranes. Envelope protein is synthesized in the endoplasmic reticulum in the form of heterodimer with protein prM. They play a role in virion budding in the ER, and the newly formed immature particle is covered with 60 spikes composed of heterodimer between precursor prM and envelope protein E. The virion is transported to the Golgi apparatus where the low pH causes dissociation of PrM-E heterodimers and formation of E homodimers. prM-E cleavage is inefficient, and many virions are only partially matured. These uncleaved prM would play a role in immune evasion. Functionally, involved in immune evasion, pathogenesis and viral replication. Once cleaved off the polyprotein, is targeted to three destinations: the viral replication cycle, the plasma membrane and the extracellular compartment. Essential for viral replication. Required for formation of the replication complex and recruitment of other non-structural proteins to the ER-derived membrane structures. Excreted as a hexameric lipoparticle that plays a role against host immune response. Antagonizing the complement function. Binds to the host macrophages and dendritic cells. Inhibits signal transduction originating from Toll-like receptor 3 (TLR3). Its function is as follows. Component of the viral RNA replication complex that functions in virion assembly and antagonizes the host immune response. Required cofactor for the serine protease function of NS3. May have membrane-destabilizing activity and form viroporins. In terms of biological role, displays three enzymatic activities: serine protease, NTPase and RNA helicase. NS3 serine protease, in association with NS2B, performs its autocleavage and cleaves the polyprotein at dibasic sites in the cytoplasm: C-prM, NS2A-NS2B, NS2B-NS3, NS3-NS4A, NS4A-2K and NS4B-NS5. NS3 RNA helicase binds RNA and unwinds dsRNA in the 3' to 5' direction. Functionally, regulates the ATPase activity of the NS3 helicase activity. NS4A allows NS3 helicase to conserve energy during unwinding. Its function is as follows. Functions as a signal peptide for NS4B and is required for the interferon antagonism activity of the latter. Induces the formation of ER-derived membrane vesicles where the viral replication takes place. Inhibits interferon (IFN)-induced host STAT1 phosphorylation and nuclear translocation, thereby preventing the establishment of cellular antiviral state by blocking the IFN-alpha/beta pathway. Inhibits STAT2 translocation in the nucleus after IFN-alpha treatment. In terms of biological role, replicates the viral (+) and (-) RNA genome, and performs the capping of genomes in the cytoplasm. NS5 methylates viral RNA cap at guanine N-7 and ribose 2'-O positions. Besides its role in RNA genome replication, also prevents the establishment of cellular antiviral state by blocking the interferon-alpha/beta (IFN-alpha/beta) signaling pathway. Inhibits host TYK2 and STAT2 phosphorylation, thereby preventing activation of JAK-STAT signaling pathway. The polypeptide is Genome polyprotein (Homo sapiens (Human)).